The chain runs to 94 residues: Small ribosomal subunit protein bS6 (94 aa).

It belongs to the bacterial ribosomal protein bS6 family.

Binds together with bS18 to 16S ribosomal RNA. In Clostridium botulinum (strain Hall / ATCC 3502 / NCTC 13319 / Type A), this protein is Small ribosomal subunit protein bS6.